We begin with the raw amino-acid sequence, 637 residues long: Chaperone protein DnaK (637 aa).

Thr196 is subject to Phosphothreonine; by autocatalysis. The disordered stretch occupies residues 598 to 637 (AEAPGADAPEGQAPQDGGSKKGGEGAVENAEYEVIDGDGK). The segment covering 627-637 (AEYEVIDGDGK) has biased composition (acidic residues).

It belongs to the heat shock protein 70 family.

In terms of biological role, acts as a chaperone. This is Chaperone protein DnaK from Chlorobium luteolum (strain DSM 273 / BCRC 81028 / 2530) (Pelodictyon luteolum).